The chain runs to 183 residues: Adenine phosphoribosyltransferase (183 aa).

It belongs to the purine/pyrimidine phosphoribosyltransferase family. As to quaternary structure, homodimer.

Its subcellular location is the cytoplasm. It carries out the reaction AMP + diphosphate = 5-phospho-alpha-D-ribose 1-diphosphate + adenine. The protein operates within purine metabolism; AMP biosynthesis via salvage pathway; AMP from adenine: step 1/1. Its function is as follows. Catalyzes a salvage reaction resulting in the formation of AMP, that is energically less costly than de novo synthesis. In Shewanella piezotolerans (strain WP3 / JCM 13877), this protein is Adenine phosphoribosyltransferase.